A 1661-amino-acid polypeptide reads, in one-letter code: Cortactin-binding protein 2 (1661 aa).

5 disordered regions span residues 1 to 27 (MATD…AEAT), 206 to 226 (EKKR…RSTE), 329 to 438 (TVPV…SLHP), 454 to 477 (NAND…SPTS), and 493 to 612 (QALS…LPPK). Residues 124–280 (KMQERMSTQL…EQLKRGNDSK (157 aa)) adopt a coiled-coil conformation. Residues 383 to 394 (GPSTGSTPDLPS) show a composition bias toward low complexity. Residues 412–426 (SIASQNYSQASSLHS) show a composition bias toward polar residues. The segment covering 454 to 466 (NANDQDQNGNTTQ) has biased composition (low complexity). Residues 467–477 (SPPSRDVSPTS) show a composition bias toward polar residues. Residue Arg497 is modified to Asymmetric dimethylarginine. ANK repeat units follow at residues 707–737 (GRPT…DINY), 741–770 (DGHS…QVNA), 774–803 (NGFT…NINH), 807–836 (GGQT…DRSV), and 840–869 (DGWT…PACG). Residues 876-896 (EPESDVFDLDGGGERPEGTVK) form a disordered region. An ANK 6 repeat occupies 910 to 940 (EGWTAAHIAASKGFKNCLEILCQHGGLEPER). Residues 1444–1480 (GKKKGENGAWRKVSTSPRKKSGRFPSPTWSKPDLSDE) form a disordered region. Phosphoserine is present on Ser1522. 2 disordered regions span residues 1555-1597 (RRFD…SNSK) and 1614-1661 (PRSK…KPNK). Positions 1580–1597 (KEVSPLSSHQTTECSNSK) are enriched in polar residues. The segment covering 1622 to 1636 (SQNTRRSSSSSNTRQ) has biased composition (low complexity). Positions 1643-1661 (SKDEIWNLRKNEQVEKPNK) are enriched in basic and acidic residues.

As to quaternary structure, interacts with CTTN/cortactin SH3 domain. Interacts with STRN, STRN4/zinedin and MOB4/phocein; this interactions mediate the association with the STRIPAK core complex and may regulate dendritic spine distribution of the STRIPAK complex in hippocampal neurons. Activation of glutamate receptors weakens the interaction with STRN and STRN4.

The protein localises to the cytoplasm. The protein resides in the cell cortex. Its subcellular location is the cell projection. It localises to the dendritic spine. Its function is as follows. Regulates the dendritic spine distribution of CTTN/cortactin in hippocampal neurons, and thus controls dendritic spinogenesis and dendritic spine maintenance. Associates with the striatin-interacting phosphatase and kinase (STRIPAK) core complex to regulate dendritic spine distribution of the STRIPAK complex in hippocampal neurons. This chain is Cortactin-binding protein 2 (CTTNBP2), found in Loxodonta africana (African elephant).